Reading from the N-terminus, the 612-residue chain is Dihydroxy-acid dehydratase (612 aa).

Residue aspartate 81 participates in Mg(2+) binding. Residue cysteine 122 coordinates [2Fe-2S] cluster. Residues aspartate 123 and lysine 124 each contribute to the Mg(2+) site. N6-carboxylysine is present on lysine 124. Residue cysteine 195 participates in [2Fe-2S] cluster binding. Position 491 (glutamate 491) interacts with Mg(2+). The active-site Proton acceptor is the serine 517.

Belongs to the IlvD/Edd family. As to quaternary structure, homodimer. [2Fe-2S] cluster is required as a cofactor. Requires Mg(2+) as cofactor.

The catalysed reaction is (2R)-2,3-dihydroxy-3-methylbutanoate = 3-methyl-2-oxobutanoate + H2O. It catalyses the reaction (2R,3R)-2,3-dihydroxy-3-methylpentanoate = (S)-3-methyl-2-oxopentanoate + H2O. It functions in the pathway amino-acid biosynthesis; L-isoleucine biosynthesis; L-isoleucine from 2-oxobutanoate: step 3/4. The protein operates within amino-acid biosynthesis; L-valine biosynthesis; L-valine from pyruvate: step 3/4. In terms of biological role, functions in the biosynthesis of branched-chain amino acids. Catalyzes the dehydration of (2R,3R)-2,3-dihydroxy-3-methylpentanoate (2,3-dihydroxy-3-methylvalerate) into 2-oxo-3-methylpentanoate (2-oxo-3-methylvalerate) and of (2R)-2,3-dihydroxy-3-methylbutanoate (2,3-dihydroxyisovalerate) into 2-oxo-3-methylbutanoate (2-oxoisovalerate), the penultimate precursor to L-isoleucine and L-valine, respectively. The sequence is that of Dihydroxy-acid dehydratase from Rhizobium meliloti (strain 1021) (Ensifer meliloti).